Consider the following 90-residue polypeptide: Small ribosomal subunit protein uS15c (90 aa).

This sequence belongs to the universal ribosomal protein uS15 family. Part of the 30S ribosomal subunit.

The protein localises to the plastid. The protein resides in the chloroplast. This chain is Small ribosomal subunit protein uS15c (rps15-A), found in Brachypodium distachyon (Purple false brome).